The chain runs to 209 residues: Scoloptoxin SSD346 (209 aa).

Residues 1 to 22 form the signal peptide; it reads NILLSSTLFVLLMFQIIGSGLG.

Post-translationally, contains 2 disulfide bonds. Expressed by the venom gland.

It localises to the secreted. Functionally, may act as a voltage-gated calcium channel inhibitor. The protein is Scoloptoxin SSD346 of Scolopendra dehaani (Thai centipede).